A 442-amino-acid chain; its full sequence is tRNA-2-methylthio-N(6)-dimethylallyladenosine synthase (442 aa).

The MTTase N-terminal domain maps to 3–120; sequence KKLYIETHGC…LPEMIDAARI (118 aa). 6 residues coordinate [4Fe-4S] cluster: C12, C49, C83, C157, C161, and C164. Positions 143–375 constitute a Radical SAM core domain; the sequence is RIDGPSAYVS…QHRLNQQGFE (233 aa). The TRAM domain maps to 378-442; sequence RQMVGSVQRI…PHSLRGSLIQ (65 aa).

It belongs to the methylthiotransferase family. MiaB subfamily. As to quaternary structure, monomer. It depends on [4Fe-4S] cluster as a cofactor.

The protein resides in the cytoplasm. The enzyme catalyses N(6)-dimethylallyladenosine(37) in tRNA + (sulfur carrier)-SH + AH2 + 2 S-adenosyl-L-methionine = 2-methylsulfanyl-N(6)-dimethylallyladenosine(37) in tRNA + (sulfur carrier)-H + 5'-deoxyadenosine + L-methionine + A + S-adenosyl-L-homocysteine + 2 H(+). Functionally, catalyzes the methylthiolation of N6-(dimethylallyl)adenosine (i(6)A), leading to the formation of 2-methylthio-N6-(dimethylallyl)adenosine (ms(2)i(6)A) at position 37 in tRNAs that read codons beginning with uridine. The sequence is that of tRNA-2-methylthio-N(6)-dimethylallyladenosine synthase from Pseudomonas fluorescens (strain Pf0-1).